The chain runs to 179 residues: Cell division protein SepF (179 aa).

The tract at residues 19-55 (DSSLPYEKRDEPVFTSVNSSQEPALPMNQPSQSAGAK) is disordered. Residues 33–55 (TSVNSSQEPALPMNQPSQSAGAK) show a composition bias toward polar residues.

It belongs to the SepF family. In terms of assembly, homodimer. Interacts with FtsZ.

It is found in the cytoplasm. In terms of biological role, cell division protein that is part of the divisome complex and is recruited early to the Z-ring. Probably stimulates Z-ring formation, perhaps through the cross-linking of FtsZ protofilaments. Its function overlaps with FtsA. This Streptococcus pneumoniae (strain JJA) protein is Cell division protein SepF.